Here is a 291-residue protein sequence, read N- to C-terminus: Diaminopimelate epimerase (291 aa).

Substrate contacts are provided by asparagine 11 and asparagine 78. Residue cysteine 87 is the Proton donor of the active site. Substrate-binding positions include 88-89 (GN), asparagine 166, asparagine 200, and 218-219 (ER). Cysteine 227 serves as the catalytic Proton acceptor. 228–229 (GT) is a substrate binding site.

The protein belongs to the diaminopimelate epimerase family. In terms of assembly, homodimer.

The protein localises to the cytoplasm. It catalyses the reaction (2S,6S)-2,6-diaminopimelate = meso-2,6-diaminopimelate. It participates in amino-acid biosynthesis; L-lysine biosynthesis via DAP pathway; DL-2,6-diaminopimelate from LL-2,6-diaminopimelate: step 1/1. Its function is as follows. Catalyzes the stereoinversion of LL-2,6-diaminopimelate (L,L-DAP) to meso-diaminopimelate (meso-DAP), a precursor of L-lysine and an essential component of the bacterial peptidoglycan. This Mycolicibacterium smegmatis (strain ATCC 700084 / mc(2)155) (Mycobacterium smegmatis) protein is Diaminopimelate epimerase.